A 167-amino-acid chain; its full sequence is Bacterial non-heme ferritin (167 aa).

In terms of domain architecture, Ferritin-like diiron spans 1–145; it reads MLSKEVVKLL…GIVDKIKLIG (145 aa). Fe cation is bound by residues Glu17, Glu50, His53, Glu94, and Gln127.

This sequence belongs to the ferritin family. Prokaryotic subfamily. As to quaternary structure, homooligomer of 24 subunits that assemble into a spherical protein shell (12 +/- 1 nM diameter) that can sequester at least 2000 iron atoms.

The protein resides in the cytoplasm. The catalysed reaction is 4 Fe(2+) + O2 + 6 H2O = 4 iron(III) oxide-hydroxide + 12 H(+). Iron-storage protein. The polypeptide is Bacterial non-heme ferritin (ftn) (Campylobacter jejuni subsp. jejuni serotype O:2 (strain ATCC 700819 / NCTC 11168)).